A 658-amino-acid chain; its full sequence is MPLFDLKSPYPPAGDQPQAIEALAKSLKNNNHYQTLVGVTGSGKTYTMANIIAQTNKPALIMSHNKTLCAQLYSEFKAFFPHNRVEYFISHFDYYQPESYIPRRDLFIEKDSSINDDLERLRLSATTSLLGYDDVIVIASVSANYGLGNPEEYLKVMEKIKVGEKRAYKNFLLKLVEMGYSRNEVVFDRGSFRATGECVDIFPAYNDAEFIRIEFFGDEIERIAVFDALEKNEIKRLDSVMLYAASQFAVGSERLNLAIKSIEDELALRLKFFKEQDKMLEYNRLKQRTEHDLEMISATGVCKGIENYARHFTGKAPNETPFCLFDYLGIFEREFLVIVDESHVSLPQFGGMYAGDMSRKSVLVEYGFRLPSALDNRPLKFDEFIHKNCQFLFVSATPNKLELELSKKNVAEQIIRPTGLLDPKFEVRDSDKQVQDLFDEIKLVVARDERVLITTLTKKMAEELCKYYAEWGLKVRYMHSEIDAIERNHIIRSLRLKEFDILIGINLLREGLDLPEVSLVAIMDADKEGFLRSETSLIQTMGRAARNANGKVLLYAKKITQSMQKAFEITSYRRAKQEEFNKIHNITPKTVTRALEEELKLRDDEIRIAKALKKDKMPKSEREKIIKELDKKMRECAKNLDFEEAMRLRDEIAKLRTL.

One can recognise a Helicase ATP-binding domain in the interval 25 to 178 (KSLKNNNHYQ…KNFLLKLVEM (154 aa)). ATP is bound at residue 38–45 (GVTGSGKT). Residues 91–114 (HFDYYQPESYIPRRDLFIEKDSSI) carry the Beta-hairpin motif. A Helicase C-terminal domain is found at 433-607 (QVQDLFDEIK…ELKLRDDEIR (175 aa)). The UVR domain occupies 623–658 (EKIIKELDKKMRECAKNLDFEEAMRLRDEIAKLRTL).

It belongs to the UvrB family. Forms a heterotetramer with UvrA during the search for lesions. Interacts with UvrC in an incision complex.

The protein localises to the cytoplasm. The UvrABC repair system catalyzes the recognition and processing of DNA lesions. A damage recognition complex composed of 2 UvrA and 2 UvrB subunits scans DNA for abnormalities. Upon binding of the UvrA(2)B(2) complex to a putative damaged site, the DNA wraps around one UvrB monomer. DNA wrap is dependent on ATP binding by UvrB and probably causes local melting of the DNA helix, facilitating insertion of UvrB beta-hairpin between the DNA strands. Then UvrB probes one DNA strand for the presence of a lesion. If a lesion is found the UvrA subunits dissociate and the UvrB-DNA preincision complex is formed. This complex is subsequently bound by UvrC and the second UvrB is released. If no lesion is found, the DNA wraps around the other UvrB subunit that will check the other stand for damage. This chain is UvrABC system protein B, found in Helicobacter pylori (strain HPAG1).